The following is a 753-amino-acid chain: Dolichyl-phosphate-mannose--protein mannosyltransferase 3 (753 aa).

Over 1–50 the chain is Cytoplasmic; that stretch reads MPYRVATGYSEKSTDDDLIWRTPIVKEELEDADNFLKDDAELYDKVKNES. Residues 51-71 traverse the membrane as a helical segment; it reads AVSHLDTIVMPIIFTVLGMFT. Over 72-148 the chain is Lumenal; the sequence is RMYKIGRNNH…IDYVKMRLFQ (77 aa). Asn-124 carries an N-linked (GlcNAc...) asparagine glycan. A helical transmembrane segment spans residues 149-169; sequence AMFSSLCVPLAYFTGRAIGFS. Over 170 to 174 the chain is Cytoplasmic; sequence RLSVW. The helical transmembrane segment at 175–195 threads the bilayer; the sequence is LFTILVIFENSYATLGKFILL. Over 196 to 235 the chain is Lumenal; that stretch reads DSMLLFFTVSSYFCLAKFHTMRKSPFSARWWLWLCLTGLN. Residues 236–256 traverse the membrane as a helical segment; it reads LGCAISVKMVGLFIISVVGIY. At 257 to 282 the chain is on the cytoplasmic side; it reads TISELWNLLSDRSVSWKVYVNHWLAR. A helical transmembrane segment spans residues 283–303; that stretch reads IFGLIIIPVCVFLLCFKIHFD. Over 304–602 the chain is Lumenal; the sequence is LLSNSGPGDS…IKYFLLGSPA (299 aa). Asn-324 is a glycosylation site (N-linked (GlcNAc...) asparagine). Residues 332–387 form the MIR 1 domain; the sequence is PRDVALGSSIISIKNQALGGALLHSHVQPFPEGSEQQQVTVYGYSDANNEWFFQRI. N-linked (GlcNAc...) asparagine glycosylation occurs at Asn-398. MIR domains follow at residues 401 to 457 and 465 to 523; these read IEFV…IEIV and PTLL…IETH. A helical transmembrane segment spans residues 603-623; the sequence is SVWPSSIAVCALIIHVIFLTL. The Cytoplasmic segment spans residues 624 to 639; the sequence is KWQRQCVILSDPVERD. A helical membrane pass occupies residues 640–660; it reads VFVMAAFYPLLAWLLHYMPFV. Topologically, residues 661-665 are lumenal; it reads VMSRV. A helical membrane pass occupies residues 666-686; that stretch reads VYAHHYLPTLYFALMILSYYF. At 687–703 the chain is on the cytoplasmic side; that stretch reads DMITKRWATRNTGKFLR. The chain crosses the membrane as a helical span at residues 704–724; it reads LGAYIVYGSIVIAGFFYFSPF. Topologically, residues 725–753 are lumenal; that stretch reads SFGMDGPVDDYAYLAWLPTWQIVEDIRNT.

This sequence belongs to the glycosyltransferase 39 family. PMT3 and PMT5 form a functional heterodimer. Also forms a minor complex with PMT1.

The protein localises to the endoplasmic reticulum membrane. It carries out the reaction a di-trans,poly-cis-dolichyl beta-D-mannosyl phosphate + L-seryl-[protein] = 3-O-(alpha-D-mannosyl)-L-seryl-[protein] + a di-trans,poly-cis-dolichyl phosphate + H(+). It catalyses the reaction a di-trans,poly-cis-dolichyl beta-D-mannosyl phosphate + L-threonyl-[protein] = 3-O-(alpha-D-mannosyl)-L-threonyl-[protein] + a di-trans,poly-cis-dolichyl phosphate + H(+). It functions in the pathway protein modification; protein glycosylation. Functionally, protein O-mannosyltransferase involved in O-glycosylation which is essential for cell wall rigidity. Forms a heterodimeric complex with PMT5 and more rarely with PMT1 to transfer mannose from Dol-P-mannose to Ser or Thr residues on proteins. Seems to have redundant activity to PMT2. The polypeptide is Dolichyl-phosphate-mannose--protein mannosyltransferase 3 (Saccharomyces cerevisiae (strain ATCC 204508 / S288c) (Baker's yeast)).